The chain runs to 400 residues: GTPase Obg (400 aa).

An Obg domain is found at 1–159 (MKFVDEVQIR…RTLKLELLLL (159 aa)). The region spanning 160 to 333 (ADVGMLGLPN…VCYDILDLLD (174 aa)) is the OBG-type G domain. Residues 166–173 (GLPNAGKS), 191–195 (FTTLV), 213–216 (DIPG), 283–286 (NKMD), and 314–316 (SAI) each bind GTP. Positions 173 and 193 each coordinate Mg(2+).

The protein belongs to the TRAFAC class OBG-HflX-like GTPase superfamily. OBG GTPase family. In terms of assembly, monomer. Mg(2+) serves as cofactor.

It localises to the cytoplasm. Functionally, an essential GTPase which binds GTP, GDP and possibly (p)ppGpp with moderate affinity, with high nucleotide exchange rates and a fairly low GTP hydrolysis rate. Plays a role in control of the cell cycle, stress response, ribosome biogenesis and in those bacteria that undergo differentiation, in morphogenesis control. This Aeromonas salmonicida (strain A449) protein is GTPase Obg.